A 1014-amino-acid chain; its full sequence is Chondroitin sulfate ABC exolyase (1014 aa).

Positions 1–14 (MLILSFLCPAFLNA) are cleaved as a signal peptide. Positions 24, 26, 50, 53, and 161 each coordinate Ca(2+). Residues histidine 345 and histidine 454 each act as proton acceptor in the active site. Tyrosine 461 (proton donor) is an active-site residue.

It belongs to the polysaccharide lyase 8 family. In terms of assembly, monomer. It depends on Ca(2+) as a cofactor. Mg(2+) serves as cofactor.

It is found in the periplasm. The enzyme catalyses Exolytic removal of Delta(4)-unsaturated disaccharide residues from the non-reducing ends of both polymeric chondroitin/dermatan sulfates and their oligosaccharide fragments.. Its activity is regulated as follows. Specific activity for chondroitin sulfate substrates increases moderately (2-fold) while an increase of 25-fold is observed for dermatan sulfate as substrate upon addition of Ca(2+) or Mg(2+) ions. Increasing the concentration of Na(+), K(+) or Cs(+) chloride from 0 to 0.1 M, increases the activity against all substrates. Further increases in salt concentration reduces the activity dramatically, with 50% inhibition occurring at 0.15 M and nearly complete inhibition at 0.4 M salt. The addition of 10 mM Ca(2+) or Mg(2+) ions increases the activity against chondroitin 4- and 6-sulfates by 2-3-fold, while the activity against dermatan sulfate increases much more significantly by 50-fold. Addition of Mn(2+) and Zn(2+) reduces activity against chondroitin sulfate substrates, but increases the activity against dermatan sulfate. Increasing the concentration of CaCl(2) with both chondroitin 4- and 6-sulfates from 0 to 0.04 M increases the activity. A further increase reduces activity, with 50% inhibition at 0.065-0.085 M and a complete inhibition of the reaction at 0.2 M. In case of dermatan sulfate, the addition of low concentration of CaCl(2) dramatically increases the activity from the basal level. The maximal activity is reached at 0.01 M CaCl(2). Broad-specificity glycosaminoglycan lyase, which acts in an exolytic fashion degrading chondroitin sulfates and dermatan sulfate to yield only disaccharide products. Has a preference for chondroitin 4-sulfate over chondroitin 6-sulfate. Has extremely low activity against hyaluronic acid. Is not active against acharan sulfate, heparin or heparan sulfate. In Bacteroides thetaiotaomicron, this protein is Chondroitin sulfate ABC exolyase (chonabc).